The following is a 309-amino-acid chain: NAD kinase (309 aa).

Residue aspartate 89 is the Proton acceptor of the active site. Residues 89–90 (DG), 163–164 (NE), histidine 174, arginine 191, aspartate 193, and 204–209 (TAYALS) each bind NAD(+).

Belongs to the NAD kinase family. It depends on a divalent metal cation as a cofactor.

It localises to the cytoplasm. The enzyme catalyses NAD(+) + ATP = ADP + NADP(+) + H(+). Its function is as follows. Involved in the regulation of the intracellular balance of NAD and NADP, and is a key enzyme in the biosynthesis of NADP. Catalyzes specifically the phosphorylation on 2'-hydroxyl of the adenosine moiety of NAD to yield NADP. This chain is NAD kinase, found in Shewanella sp. (strain MR-4).